A 208-amino-acid chain; its full sequence is ATP-dependent Clp protease proteolytic subunit (208 aa).

The active-site Nucleophile is the S98. Residue H123 is part of the active site.

The protein belongs to the peptidase S14 family. In terms of assembly, fourteen ClpP subunits assemble into 2 heptameric rings which stack back to back to give a disk-like structure with a central cavity, resembling the structure of eukaryotic proteasomes.

The protein localises to the cytoplasm. The enzyme catalyses Hydrolysis of proteins to small peptides in the presence of ATP and magnesium. alpha-casein is the usual test substrate. In the absence of ATP, only oligopeptides shorter than five residues are hydrolyzed (such as succinyl-Leu-Tyr-|-NHMec, and Leu-Tyr-Leu-|-Tyr-Trp, in which cleavage of the -Tyr-|-Leu- and -Tyr-|-Trp bonds also occurs).. Cleaves peptides in various proteins in a process that requires ATP hydrolysis. Has a chymotrypsin-like activity. Plays a major role in the degradation of misfolded proteins. In Wolbachia pipientis subsp. Culex pipiens (strain wPip), this protein is ATP-dependent Clp protease proteolytic subunit.